We begin with the raw amino-acid sequence, 67 residues long: Probable Sec-independent protein translocase protein TatE (67 aa).

The chain crosses the membrane as a helical span at residues 4–21; that stretch reads ISITKLLVVAALVVLLFG.

Belongs to the TatA/E family. TatE subfamily.

It localises to the cell inner membrane. Functionally, part of the twin-arginine translocation (Tat) system that transports large folded proteins containing a characteristic twin-arginine motif in their signal peptide across membranes. TatE shares overlapping functions with TatA. This Salmonella arizonae (strain ATCC BAA-731 / CDC346-86 / RSK2980) protein is Probable Sec-independent protein translocase protein TatE.